A 423-amino-acid polypeptide reads, in one-letter code: uncharacterized protein (423 aa).

Substrate is bound by residues Ser51, Asp138, and Asn150. ATP-binding positions include Thr170 to Asp171 and Thr214 to Lys220. The 92-residue stretch at Lys315–Ser406 folds into the PUA domain.

Belongs to the glutamate 5-kinase family.

The protein resides in the cytoplasm. This is an uncharacterized protein from Saccharomyces cerevisiae (strain ATCC 204508 / S288c) (Baker's yeast).